A 432-amino-acid chain; its full sequence is MSLSPKQEQLFKQASKHIPGGVNSPVRAFNGVGGTPVFIEKAKGAYLWDVDGKRYVDYVGSWGPMILGHAHPDIIKAVQTAAEDGLSFGAPTVHETTLADIICEIMPSIELVRMTNSGTEATMTAIRLARGYTGRDKIVKFEGCYHGHSDSLLVKAGSGLLTKGEGEPTSKGVPADFAKHTLTLPYNDVAALKECFAKFGHEIAGVIIEPVAGNMNMVKPIDGFLQAIRDVCDEYKSVFIIDEVMTGFRVALGGAQSVYNVKPDLTTLGKIIGAGLPVGAFGGKREIMECIAPLGGVYQAGTLSGNPLAMRAGIEMFKHLRQPDFYSKLSAQLEKLLAGLQAAADEAGIPFKTQQAGAMFGLYFTDQEDITSFDSMLACDIEAFKKFFHGMLKRGVNLAPSAFEAGFISSAHSDEDIEFTIQAAKETFAEMK.

N6-(pyridoxal phosphate)lysine is present on Lys-270.

The protein belongs to the class-III pyridoxal-phosphate-dependent aminotransferase family. HemL subfamily. In terms of assembly, homodimer. Pyridoxal 5'-phosphate serves as cofactor.

It localises to the cytoplasm. It carries out the reaction (S)-4-amino-5-oxopentanoate = 5-aminolevulinate. Its pathway is porphyrin-containing compound metabolism; protoporphyrin-IX biosynthesis; 5-aminolevulinate from L-glutamyl-tRNA(Glu): step 2/2. In Acinetobacter baumannii (strain ACICU), this protein is Glutamate-1-semialdehyde 2,1-aminomutase.